The following is a 689-amino-acid chain: Glycine--tRNA ligase beta subunit (689 aa).

This sequence belongs to the class-II aminoacyl-tRNA synthetase family. Tetramer of two alpha and two beta subunits.

The protein resides in the cytoplasm. The catalysed reaction is tRNA(Gly) + glycine + ATP = glycyl-tRNA(Gly) + AMP + diphosphate. The chain is Glycine--tRNA ligase beta subunit from Salmonella dublin (strain CT_02021853).